The chain runs to 136 residues: Small ribosomal subunit protein uS9 (136 aa).

A disordered region spans residues Ser-97–Arg-136. Positions Pro-98 to Ala-116 are enriched in basic and acidic residues. Residues Lys-117–Arg-136 are compositionally biased toward basic residues.

Belongs to the universal ribosomal protein uS9 family.

The sequence is that of Small ribosomal subunit protein uS9 from Prochlorococcus marinus (strain MIT 9301).